The sequence spans 190 residues: Myosin, light chain 1, alkali; skeletal, fast (190 aa).

The span at Met1–Glu17 shows a compositional bias: basic and acidic residues. The segment at Met1–Ala33 is disordered. Residues Ala19–Pro28 are compositionally biased toward pro residues. 2 EF-hand domains span residues Asp46–Asn81 and Ala123–Lys158.

As to quaternary structure, myosin is a hexamer of 2 heavy chains and 4 light chains. Does not bind calcium. Expressed in fast muscle fibers during skeletal muscle differentiation.

Non-regulatory myosin light chain required for proper formation and/or maintenance of myofibers, and thus appropriate muscle function. The polypeptide is Myosin, light chain 1, alkali; skeletal, fast (Danio rerio (Zebrafish)).